Here is a 155-residue protein sequence, read N- to C-terminus: Ribosomal RNA large subunit methyltransferase H (155 aa).

Residues Leu73, Gly104, and 123-128 (LSPLTL) each bind S-adenosyl-L-methionine.

The protein belongs to the RNA methyltransferase RlmH family. In terms of assembly, homodimer.

The protein resides in the cytoplasm. The catalysed reaction is pseudouridine(1915) in 23S rRNA + S-adenosyl-L-methionine = N(3)-methylpseudouridine(1915) in 23S rRNA + S-adenosyl-L-homocysteine + H(+). Functionally, specifically methylates the pseudouridine at position 1915 (m3Psi1915) in 23S rRNA. This Pseudomonas aeruginosa (strain UCBPP-PA14) protein is Ribosomal RNA large subunit methyltransferase H.